The primary structure comprises 302 residues: Sulfate adenylyltransferase subunit 2 (302 aa).

This sequence belongs to the PAPS reductase family. CysD subfamily. As to quaternary structure, heterodimer composed of CysD, the smaller subunit, and CysN.

It catalyses the reaction sulfate + ATP + H(+) = adenosine 5'-phosphosulfate + diphosphate. It participates in sulfur metabolism; hydrogen sulfide biosynthesis; sulfite from sulfate: step 1/3. With CysN forms the ATP sulfurylase (ATPS) that catalyzes the adenylation of sulfate producing adenosine 5'-phosphosulfate (APS) and diphosphate, the first enzymatic step in sulfur assimilation pathway. APS synthesis involves the formation of a high-energy phosphoric-sulfuric acid anhydride bond driven by GTP hydrolysis by CysN coupled to ATP hydrolysis by CysD. This Buchnera aphidicola subsp. Acyrthosiphon pisum (strain 5A) protein is Sulfate adenylyltransferase subunit 2.